Reading from the N-terminus, the 578-residue chain is Hemolysin 4 (578 aa).

The tract at residues 289–322 (KDGPKASWRRRPSSASSVTMPTTPRIIGSNARPE) is disordered. The Ricin B-type lectin domain maps to 448-539 (RPVNLQLGGF…LSNLSAHQLL (92 aa)).

The protein belongs to the HlyA hemolysin family.

Functionally, bacterial hemolysins are exotoxins that attack blood cell membranes and cause cell rupture by mechanisms not clearly defined. This is Hemolysin 4 (ash4) from Aeromonas salmonicida.